The chain runs to 643 residues: Galactan 5-O-arabinofuranosyltransferase (643 aa).

13 helical membrane passes run 25–45 (VLVALGQLAAAVVVAVGVAVV), 66–86 (ALTTVGQVGCLAGLVGIGWLW), 97–117 (LGGLVLVSAFTVVTLGMPLGA), 180–200 (FKPWAITSMAIAVAVALVLWW), 205–225 (FEYALLVTVATAAVMLAYSSP), 229–249 (AAMITVLLPPMLVLTWSGLGA), 255–272 (WAAVVGAGVFLGFAATWY), 276–293 (VAYGAFTVVLMALLLAGS), 309–329 (LAVVGAIAAAIGSTTWLPYLL), 355–375 (FPMLQFSLLGAICLLGTLWLV), 384–404 (AGALAIGVLAVYLWSLLSMLA), 420–440 (LSVLLVAAGAFGFVEAVQALG), and 445–465 (GVIPMAAAIGLAGAIAFSQDI). Over 466–643 (PDVLRPDLTI…LAIRKPQESA (178 aa)) the chain is Extracellular.

This sequence belongs to the glycosyltransferase 85 family.

Its subcellular location is the cell membrane. The enzyme catalyses Adds an alpha-D-arabinofuranosyl group from trans,octacis-decaprenylphospho-beta-D-arabinofuranose at the 5-O-position of the eighth, tenth and twelfth galactofuranose unit of the galactofuranan chain of [beta-D-galactofuranosyl-(1-&gt;5)-beta-D-galactofuranosyl-(1-&gt;6)]14-beta-D-galactofuranosyl-(1-&gt;5)-beta-D-galactofuranosyl-(1-&gt;4)-alpha-L-rhamnopyranosyl-(1-&gt;3)-N-acetyl-alpha-D-glucosaminyl-diphospho-trans,octacis-decaprenol.. It participates in cell wall biogenesis; cell wall polysaccharide biosynthesis. Functionally, involved in the biosynthesis of the arabinogalactan (AG) region of the mycolylarabinogalactan-peptidoglycan (mAGP) complex, an essential component of the mycobacterial cell wall. Catalyzes the addition of the first key arabinofuranosyl (Araf) residue from the sugar donor decaprenyl-phospho-arabinose (DPA) on the C-5 of a 6-linked galactofuranosyl (Galf) of the galactan domain, thus 'priming' the galactan for further elaboration by other arabinofuranosyltransferases. It is not able to add an Araf residue to a terminal Galf. This chain is Galactan 5-O-arabinofuranosyltransferase, found in Mycobacterium tuberculosis (strain CDC 1551 / Oshkosh).